A 638-amino-acid polypeptide reads, in one-letter code: Chaperone protein DnaK (638 aa).

Phosphothreonine; by autocatalysis is present on Thr-197. A disordered region spans residues 598–638; the sequence is QQSAPSGAAAGPDEGAPSGSGGTSGTRGGDDVIDAEFTETK. Positions 615–624 are enriched in gly residues; the sequence is SGSGGTSGTR. The segment covering 628-638 has biased composition (acidic residues); it reads DVIDAEFTETK.

Belongs to the heat shock protein 70 family.

In terms of biological role, acts as a chaperone. This is Chaperone protein DnaK from Gloeobacter violaceus (strain ATCC 29082 / PCC 7421).